The primary structure comprises 296 residues: HTH-type transcriptional regulator IlvR (296 aa).

The HTH lysR-type domain occupies 1–58 (MDIRQFRHFAAVAETLHFGRAAERLGITQPPLSQSIQALEKALGAPLFARTKRHVELT). The segment at residues 18-37 (FGRAAERLGITQPPLSQSIQ) is a DNA-binding region (H-T-H motif).

The protein belongs to the LysR transcriptional regulatory family.

In terms of biological role, positively regulates the expression of the ilvD gene while negatively autoregulating its own expression. The polypeptide is HTH-type transcriptional regulator IlvR (ilvR) (Caulobacter vibrioides (strain ATCC 19089 / CIP 103742 / CB 15) (Caulobacter crescentus)).